A 546-amino-acid chain; its full sequence is Chaperonin GroEL (546 aa).

ATP-binding positions include 30 to 33 (TLGP), Lys-51, 87 to 91 (DGTTT), Gly-415, and Asp-496. The disordered stretch occupies residues 527–546 (EKKAPAGAPGGMGGMGDMDF). The segment covering 534–546 (APGGMGGMGDMDF) has biased composition (gly residues).

The protein belongs to the chaperonin (HSP60) family. As to quaternary structure, forms a cylinder of 14 subunits composed of two heptameric rings stacked back-to-back. Interacts with the co-chaperonin GroES.

The protein resides in the cytoplasm. The catalysed reaction is ATP + H2O + a folded polypeptide = ADP + phosphate + an unfolded polypeptide.. Functionally, together with its co-chaperonin GroES, plays an essential role in assisting protein folding. The GroEL-GroES system forms a nano-cage that allows encapsulation of the non-native substrate proteins and provides a physical environment optimized to promote and accelerate protein folding. The chain is Chaperonin GroEL from Rhodospirillum centenum (strain ATCC 51521 / SW).